The primary structure comprises 266 residues: Shikimate dehydrogenase (NADP(+)) (266 aa).

Shikimate is bound by residues Ser14 to Ser16 and Thr61. Lys65 (proton acceptor) is an active-site residue. Asn85 and Asp100 together coordinate shikimate. NADP(+)-binding positions include Gly124–Ala128 and Ala210. Tyr212 serves as a coordination point for shikimate. Gly233 contacts NADP(+).

Belongs to the shikimate dehydrogenase family. Homodimer.

It catalyses the reaction shikimate + NADP(+) = 3-dehydroshikimate + NADPH + H(+). Its pathway is metabolic intermediate biosynthesis; chorismate biosynthesis; chorismate from D-erythrose 4-phosphate and phosphoenolpyruvate: step 4/7. Its function is as follows. Involved in the biosynthesis of the chorismate, which leads to the biosynthesis of aromatic amino acids. Catalyzes the reversible NADPH linked reduction of 3-dehydroshikimate (DHSA) to yield shikimate (SA). In Halobacterium salinarum (strain ATCC 29341 / DSM 671 / R1), this protein is Shikimate dehydrogenase (NADP(+)).